Here is a 605-residue protein sequence, read N- to C-terminus: Elongation factor 4 (605 aa).

The tr-type G domain occupies 9–192 (SRTRNFCIIA…AIIARIPSPK (184 aa)). Residues 21–26 (DHGKST) and 139–142 (NKID) contribute to the GTP site.

Belongs to the TRAFAC class translation factor GTPase superfamily. Classic translation factor GTPase family. LepA subfamily.

The protein localises to the cell inner membrane. The enzyme catalyses GTP + H2O = GDP + phosphate + H(+). In terms of biological role, required for accurate and efficient protein synthesis under certain stress conditions. May act as a fidelity factor of the translation reaction, by catalyzing a one-codon backward translocation of tRNAs on improperly translocated ribosomes. Back-translocation proceeds from a post-translocation (POST) complex to a pre-translocation (PRE) complex, thus giving elongation factor G a second chance to translocate the tRNAs correctly. Binds to ribosomes in a GTP-dependent manner. The protein is Elongation factor 4 of Chlorobium limicola (strain DSM 245 / NBRC 103803 / 6330).